The primary structure comprises 337 residues: N-acetyl-gamma-glutamyl-phosphate reductase (337 aa).

Cys-155 is an active-site residue.

Belongs to the NAGSA dehydrogenase family. Type 1 subfamily.

It is found in the cytoplasm. The catalysed reaction is N-acetyl-L-glutamate 5-semialdehyde + phosphate + NADP(+) = N-acetyl-L-glutamyl 5-phosphate + NADPH + H(+). The protein operates within amino-acid biosynthesis; L-arginine biosynthesis; N(2)-acetyl-L-ornithine from L-glutamate: step 3/4. Functionally, catalyzes the NADPH-dependent reduction of N-acetyl-5-glutamyl phosphate to yield N-acetyl-L-glutamate 5-semialdehyde. The sequence is that of N-acetyl-gamma-glutamyl-phosphate reductase from Alteromonas mediterranea (strain DSM 17117 / CIP 110805 / LMG 28347 / Deep ecotype).